An 825-amino-acid chain; its full sequence is BEN domain-containing protein 3 (825 aa).

The segment covering 1-11 has biased composition (acidic residues); that stretch reads MNSTEISEDVE. Residues 1–35 are disordered; the sequence is MNSTEISEDVEEVLKNNPVKAEGSDATLDCSRNSR. Residue lysine 20 forms a Glycyl lysine isopeptide (Lys-Gly) (interchain with G-Cter in SUMO); alternate linkage. Lysine 20 participates in a covalent cross-link: Glycyl lysine isopeptide (Lys-Gly) (interchain with G-Cter in SUMO1); alternate. Residue lysine 20 forms a Glycyl lysine isopeptide (Lys-Gly) (interchain with G-Cter in SUMO2); alternate linkage. Glycyl lysine isopeptide (Lys-Gly) (interchain with G-Cter in SUMO2) cross-links involve residues lysine 39, lysine 54, lysine 56, lysine 71, lysine 126, lysine 127, lysine 135, lysine 140, lysine 156, and lysine 174. Positions 52-122 are disordered; sequence SSKRKQLDSD…EEEPSTEATV (71 aa). The short motif at 54-56 is the Nuclear localization signal element; it reads KRK. In terms of domain architecture, BEN 1 spans 239–340; it reads PPPEYQLTAS…DFFSRFWAQR (102 aa). Serine 376 carries the phosphoserine modification. Residues 384 to 484 form the BEN 2 domain; it reads ASDHVVDTQD…DELEGLGLEG (101 aa). Lysine 424 participates in a covalent cross-link: Glycyl lysine isopeptide (Lys-Gly) (interchain with G-Cter in SUMO2). Serine 486 carries the phosphoserine modification. A Glycyl lysine isopeptide (Lys-Gly) (interchain with G-Cter in SUMO); alternate cross-link involves residue lysine 509. Residue lysine 509 forms a Glycyl lysine isopeptide (Lys-Gly) (interchain with G-Cter in SUMO2); alternate linkage. Lysine 525 participates in a covalent cross-link: Glycyl lysine isopeptide (Lys-Gly) (interchain with G-Cter in SUMO2). In terms of domain architecture, BEN 3 spans 547–647; the sequence is GSDCLLSKEQ…ERCRRRDTEQ (101 aa). Lysine 697 participates in a covalent cross-link: Glycyl lysine isopeptide (Lys-Gly) (interchain with G-Cter in SUMO2). The region spanning 712 to 813 is the BEN 4 domain; the sequence is VPSPYLLSDK…ERCRRPNRKK (102 aa).

Homooligomer, probably a homooctamer. Interacts with HDAC2 and HDAC3, but not HDAC1. Interacts with SALL4. Interacts with SMARCA5/SNF2H, BAZ2A/TIP5 and USP21. Interacts with the nucleosome remodeling and histone deacetylase (NuRD) repressor complex. Interacts (via BEN domains 1 and 3) with ERCC6L (via N-terminal TPR repeat); the interaction is direct. Post-translationally, sumoylated at Lys-20 by SUMO1 and at Lys-509 by SUMO1, SUMO2 and SUMO3. Sumoylation probably occurs sequentially, with that of Lys-20 preceding that of Lys-509. It does not alter association with heterochromatin, but is required for the repression of transcription.

It is found in the nucleus. It localises to the nucleolus. Transcriptional repressor which associates with the NoRC (nucleolar remodeling complex) complex and plays a key role in repressing rDNA transcription. The sumoylated form modulates the stability of the NoRC complex component BAZ2A/TIP5 by controlling its USP21-mediated deubiquitination. Binds to unmethylated major satellite DNA and is involved in the recruitment of the Polycomb repressive complex 2 (PRC2) to major satellites. Stimulates the ERCC6L translocase and ATPase activities. This is BEN domain-containing protein 3 (Bend3) from Mus musculus (Mouse).